The following is a 737-amino-acid chain: MFPLLHFIVLIDVKDFPLTEGSTITPLCQKGYFPCGNLTKCLPRAFHCDGVDDCGNGADEDNCGDTSGWATIFGTVHGNANNVALTQECFLNQYPQPCDCKGTELECINADLRAVPVISSNTTLLSLKKNKIHSLPDKVFTKYTQLKQIFLQHNCITHISRKAFFGLHNLQILYLSHNCITTLRPGVFKDLHQLTWLILDDNPITRISQQLFTGLKSLFFLSMVNNYLEALPKQMCAQMPQLNWMDLEGNGIKYLTNSSFLSCNSLTVLFLPRNQIDFVPEKTFSSLKNLGELDLSSNMIMELPPEIFKDLKLLQKLNLSSNPLLYLHKNQFESLKQLQSLDLERIEIPNINTRMFQPMMNLSHIYFKNFRYCSYAPHVRICMPLTDGISSFEDLLANNILRIFVWVIAFITCFGNLFVIGMRSFIKAENTTHATSIKILCCADCLMGVYLFFIGFFDIKYRGQYQKYALLWMESLQCRLMGFLAMLSTEVSVLLLTYLTLEKFLAIVFPFSNIRPGKWQTMVILICIWIVGFLIAVIPFWKEDYFGNFYGKNGVCFPLYYDQTEDIGSKGYSLGIFLGVNLLAFLIIVFSYTIMFCSIKKTALQTSEVRNPIGREVAVANRFFFIVFSDAICWIPVFVIKILSLFRVEIPGTITSWIVIFFLPVNSALNPILYTLTTSFFKDKLKQLLHKHRRKSIFKTKKKSLSTSIVWTDDSSSLKLGVLNKITLGDSIVKPIS.

Residues 1 to 399 (MFPLLHFIVL…SSFEDLLANN (399 aa)) lie on the Extracellular side of the membrane. The LDL-receptor class A domain occupies 27–64 (LCQKGYFPCGNLTKCLPRAFHCDGVDDCGNGADEDNCG). Intrachain disulfides connect Cys28–Cys41, Cys35–Cys54, and Cys48–Cys63. A glycan (N-linked (GlcNAc...) asparagine) is linked at Asn37. Residue Asn121 is glycosylated (N-linked (GlcNAc...) asparagine). LRR repeat units follow at residues 121-142 (NTTL…VFTK), 145-166 (QLKQ…AFFG), 169-190 (NLQI…VFKD), 193-214 (QLTW…LFTG), 217-238 (SLFF…MCAQ), 241-262 (QLNW…SFLS), 265-286 (SLTV…TFSS), 289-310 (NLGE…IFKD), 313-334 (LLQK…QFES), and 337-358 (QLQS…MFQP). The N-linked (GlcNAc...) asparagine glycan is linked to Asn257. An N-linked (GlcNAc...) asparagine glycan is attached at Asn318. Asn361 carries an N-linked (GlcNAc...) asparagine glycan. The chain crosses the membrane as a helical span at residues 400–420 (ILRIFVWVIAFITCFGNLFVI). Topologically, residues 421–438 (GMRSFIKAENTTHATSIK) are cytoplasmic. A helical membrane pass occupies residues 439 to 459 (ILCCADCLMGVYLFFIGFFDI). The Extracellular segment spans residues 460–478 (KYRGQYQKYALLWMESLQC). A disulfide bond links Cys478 and Cys556. The helical transmembrane segment at 479 to 501 (RLMGFLAMLSTEVSVLLLTYLTL) threads the bilayer. At 502 to 520 (EKFLAIVFPFSNIRPGKWQ) the chain is on the cytoplasmic side. The helical transmembrane segment at 521–541 (TMVILICIWIVGFLIAVIPFW) threads the bilayer. Residues 542–575 (KEDYFGNFYGKNGVCFPLYYDQTEDIGSKGYSLG) lie on the Extracellular side of the membrane. The chain crosses the membrane as a helical span at residues 576–596 (IFLGVNLLAFLIIVFSYTIMF). Over 597–622 (CSIKKTALQTSEVRNPIGREVAVANR) the chain is Cytoplasmic. A helical transmembrane segment spans residues 623–643 (FFFIVFSDAICWIPVFVIKIL). Topologically, residues 644–653 (SLFRVEIPGT) are extracellular. Residues 654-674 (ITSWIVIFFLPVNSALNPILY) traverse the membrane as a helical segment. Over 675–737 (TLTTSFFKDK…LGDSIVKPIS (63 aa)) the chain is Cytoplasmic.

The protein belongs to the G-protein coupled receptor 1 family.

Its subcellular location is the cell membrane. Receptor for relaxin. The activity of this receptor is mediated by G proteins leading to stimulation of adenylate cyclase and an increase of cAMP. May also be a receptor for Leydig insulin-like peptide (INSL3). This Canis lupus familiaris (Dog) protein is Relaxin receptor 2 (RXFP2).